The primary structure comprises 357 residues: Guanine nucleotide-binding protein alpha-16 subunit (357 aa).

G2 is lipidated: N-myristoyl glycine. C3 carries the S-palmitoyl cysteine lipid modification. Residues R32 to Y357 form the G-alpha domain. The interval K35 to T48 is G1 motif. GTP contacts are provided by residues G40–S47, L175–T181, D200–Q204, N269–D272, and A329. Positions 47 and 181 each coordinate Mg(2+). Positions D173 to T181 are G2 motif. Residues F196–R205 are G3 motif. The G4 motif stretch occupies residues I265–D272. A G5 motif region spans residues T327–T332.

This sequence belongs to the G-alpha family. In terms of assembly, g proteins are composed of 3 units; alpha, beta and gamma. The alpha chain contains the guanine nucleotide binding site.

In terms of biological role, guanine nucleotide-binding proteins (G proteins) are involved as modulators or transducers in various transmembrane signaling systems. In the 1-cell embryo, probably together with goa-1, controls nuclear rotation and spindle elongation during mitosis. During the first embryonic cell divisons, plays a role in gpr-1/2 cortical localization and in the proper orientation of EMS blastomere mitotic spindle. In Caenorhabditis elegans, this protein is Guanine nucleotide-binding protein alpha-16 subunit (gpa-16).